We begin with the raw amino-acid sequence, 158 residues long: Transcriptional repressor NrdR (158 aa).

A zinc finger lies at 3–34 (CPFCNSEETRVIDTRLTDDGHVVRRRRECEHC). One can recognise an ATP-cone domain in the interval 49 to 139 (IFVVKKGGQR…VYKEFRDLDH (91 aa)).

The protein belongs to the NrdR family. It depends on Zn(2+) as a cofactor.

Negatively regulates transcription of bacterial ribonucleotide reductase nrd genes and operons by binding to NrdR-boxes. In Kosmotoga olearia (strain ATCC BAA-1733 / DSM 21960 / TBF 19.5.1), this protein is Transcriptional repressor NrdR.